Reading from the N-terminus, the 470-residue chain is MATFMTEDFLLKNDIARTLYHKYAAPMPIYDFHCHLSPQEIADDRRFDNLGQIWLEGDHYKWRALRSAGVDESLITGKETSDYEKYMAWANTVPKTLGNPLYHWTHLELRRPFGITSTLFGPDTAESIWTQCNEKLATPAFSARGIMQQMNVRMVGTTDDPIDSLEYHRQIAADDSINIEVAPSWRPDKVFKIELDGFVDYLGKLEAAADVSITRFDDLRQALTRRLDHFAACGCRASDHGIETLRFAPVPDDAQLDAILGKRLAGETLSELEIAQFTTAVLVWLGRQYAARGWVMQLHIGAIRNNNTRMFRLLGPDTGFDSIGDNNISWALSRLLDSMDVTNELPKTILYCLNPRDNEVLATMIGNFQGPGIAGKVQFGSGWWFNDQKDGMLRQLEQLSQMGLLSQFVGMLTDSRSFLSYTRHEYFRRILCNLLGQWAQDGEIPDDEAMLSRMVQDICFNNAQRYFTIK.

Belongs to the metallo-dependent hydrolases superfamily. Uronate isomerase family.

It catalyses the reaction D-glucuronate = D-fructuronate. It carries out the reaction aldehydo-D-galacturonate = keto-D-tagaturonate. The protein operates within carbohydrate metabolism; pentose and glucuronate interconversion. In Salmonella paratyphi A (strain ATCC 9150 / SARB42), this protein is Uronate isomerase.